The chain runs to 210 residues: Urease accessory protein UreF (210 aa).

It belongs to the UreF family. UreD, UreF and UreG form a complex that acts as a GTP-hydrolysis-dependent molecular chaperone, activating the urease apoprotein by helping to assemble the nickel containing metallocenter of UreC. The UreE protein probably delivers the nickel.

It is found in the cytoplasm. Its function is as follows. Required for maturation of urease via the functional incorporation of the urease nickel metallocenter. The polypeptide is Urease accessory protein UreF (Cereibacter sphaeroides (strain ATCC 17029 / ATH 2.4.9) (Rhodobacter sphaeroides)).